Consider the following 37-residue polypeptide: Large ribosomal subunit protein bL36c (37 aa).

Belongs to the bacterial ribosomal protein bL36 family.

It localises to the plastid. The protein resides in the chloroplast. The protein is Large ribosomal subunit protein bL36c (rpl36) of Chlorella vulgaris (Green alga).